Consider the following 318-residue polypeptide: Protoheme IX farnesyltransferase (318 aa).

The next 9 membrane-spanning stretches (helical) occupy residues 29–49 (IIPLLLITTAGSMWIAAQGQV), 51–71 (PVLLLVTMAGGTLAAASAQTI), 102–122 (LIFAIALAVLSFTLLTVFANL), 123–143 (LAASLALSGIIFYVLIYTHWL), 151–171 (IVIGGAAGAIPALVGWAAVTG), 179–199 (LIFAIVFLWTPPHFWALALMI), 219–239 (ATVKQIWYYTLITVVATLLLV), 241–261 (PLHSSGIVYAAIAISLGAVFI), and 280–300 (LFLYSISYMMLLCLGMVIDSL).

It belongs to the UbiA prenyltransferase family. Protoheme IX farnesyltransferase subfamily.

The protein localises to the cell inner membrane. It carries out the reaction heme b + (2E,6E)-farnesyl diphosphate + H2O = Fe(II)-heme o + diphosphate. The protein operates within porphyrin-containing compound metabolism; heme O biosynthesis; heme O from protoheme: step 1/1. In terms of biological role, converts heme B (protoheme IX) to heme O by substitution of the vinyl group on carbon 2 of heme B porphyrin ring with a hydroxyethyl farnesyl side group. The polypeptide is Protoheme IX farnesyltransferase (Trichormus variabilis (strain ATCC 29413 / PCC 7937) (Anabaena variabilis)).